Here is a 227-residue protein sequence, read N- to C-terminus: MAYPFQLGLQDATSPIMEELLHFHDHTLMIVFLISSLVLYIISLMLTTKLTHTSTMDAQEVETVWTILPAIILILIALPSLRILYMMDEINNPSLTVKTMGHQWYWSYEYTDYEDLNFDSYMIPTQELKPGELRLLEVDNRVVLPMEMTIRMLISSEDVLHSWAVPSLGLKTDAIPGRLNQTTLMAMRPGLYYGQCSEICGSNHSFMPIVLEMVPLSYFEAWSALMV.

Residues 1–14 (MAYPFQLGLQDATS) lie on the Mitochondrial intermembrane side of the membrane. Residues 15–45 (PIMEELLHFHDHTLMIVFLISSLVLYIISLM) traverse the membrane as a helical segment. The Mitochondrial matrix portion of the chain corresponds to 46 to 59 (LTTKLTHTSTMDAQ). Residues 60 to 87 (EVETVWTILPAIILILIALPSLRILYMM) form a helical membrane-spanning segment. The Mitochondrial intermembrane portion of the chain corresponds to 88–227 (DEINNPSLTV…YFEAWSALMV (140 aa)). The Cu cation site is built by His-161, Cys-196, Glu-198, Cys-200, His-204, and Met-207. Glu-198 contacts Mg(2+). The residue at position 218 (Tyr-218) is a Phosphotyrosine.

The protein belongs to the cytochrome c oxidase subunit 2 family. As to quaternary structure, component of the cytochrome c oxidase (complex IV, CIV), a multisubunit enzyme composed of 14 subunits. The complex is composed of a catalytic core of 3 subunits MT-CO1, MT-CO2 and MT-CO3, encoded in the mitochondrial DNA, and 11 supernumerary subunits COX4I, COX5A, COX5B, COX6A, COX6B, COX6C, COX7A, COX7B, COX7C, COX8 and NDUFA4, which are encoded in the nuclear genome. The complex exists as a monomer or a dimer and forms supercomplexes (SCs) in the inner mitochondrial membrane with NADH-ubiquinone oxidoreductase (complex I, CI) and ubiquinol-cytochrome c oxidoreductase (cytochrome b-c1 complex, complex III, CIII), resulting in different assemblies (supercomplex SCI(1)III(2)IV(1) and megacomplex MCI(2)III(2)IV(2)). Found in a complex with TMEM177, COA6, COX18, COX20, SCO1 and SCO2. Interacts with TMEM177 in a COX20-dependent manner. Interacts with COX20. Interacts with COX16. Requires Cu cation as cofactor.

The protein resides in the mitochondrion inner membrane. The catalysed reaction is 4 Fe(II)-[cytochrome c] + O2 + 8 H(+)(in) = 4 Fe(III)-[cytochrome c] + 2 H2O + 4 H(+)(out). Its function is as follows. Component of the cytochrome c oxidase, the last enzyme in the mitochondrial electron transport chain which drives oxidative phosphorylation. The respiratory chain contains 3 multisubunit complexes succinate dehydrogenase (complex II, CII), ubiquinol-cytochrome c oxidoreductase (cytochrome b-c1 complex, complex III, CIII) and cytochrome c oxidase (complex IV, CIV), that cooperate to transfer electrons derived from NADH and succinate to molecular oxygen, creating an electrochemical gradient over the inner membrane that drives transmembrane transport and the ATP synthase. Cytochrome c oxidase is the component of the respiratory chain that catalyzes the reduction of oxygen to water. Electrons originating from reduced cytochrome c in the intermembrane space (IMS) are transferred via the dinuclear copper A center (CU(A)) of subunit 2 and heme A of subunit 1 to the active site in subunit 1, a binuclear center (BNC) formed by heme A3 and copper B (CU(B)). The BNC reduces molecular oxygen to 2 water molecules using 4 electrons from cytochrome c in the IMS and 4 protons from the mitochondrial matrix. The sequence is that of Cytochrome c oxidase subunit 2 (MT-CO2) from Cuon alpinus (Dhole).